A 744-amino-acid chain; its full sequence is Catalase-peroxidase 3 (744 aa).

A cross-link (tryptophyl-tyrosyl-methioninium (Trp-Tyr) (with M-254)) is located at residues 106 to 228 (WHFAGTYRIG…LAASEMGLIY (123 aa)). The active-site Proton acceptor is His-107. Residues 228-254 (YVDPQGPATLPDPLASARDIRETFRRM) constitute a cross-link (tryptophyl-tyrosyl-methioninium (Tyr-Met) (with W-106)). Heme b is bound at residue His-269.

Belongs to the peroxidase family. Peroxidase/catalase subfamily. As to quaternary structure, homodimer or homotetramer. Heme b is required as a cofactor. Post-translationally, formation of the three residue Trp-Tyr-Met cross-link is important for the catalase, but not the peroxidase activity of the enzyme.

It catalyses the reaction H2O2 + AH2 = A + 2 H2O. It carries out the reaction 2 H2O2 = O2 + 2 H2O. Functionally, bifunctional enzyme with both catalase and broad-spectrum peroxidase activity. This chain is Catalase-peroxidase 3, found in Mycolicibacterium smegmatis (strain ATCC 700084 / mc(2)155) (Mycobacterium smegmatis).